The following is a 348-amino-acid chain: Putative [LysW]-L-2-aminoadipate/[LysW]-L-glutamate phosphate reductase (348 aa).

9 to 12 (SGYV) provides a ligand contact to NADP(+). Cysteine 149 is an active-site residue. Asparagine 315 is a binding site for NADP(+).

The protein belongs to the NAGSA dehydrogenase family. Type 1 subfamily. LysY sub-subfamily.

The protein localises to the cytoplasm. The enzyme catalyses [amino-group carrier protein]-C-terminal-N-(1-carboxy-5-oxopentan-1-yl)-L-glutamine + phosphate + NADP(+) = [amino-group carrier protein]-C-terminal-N-(1-carboxy-5-phosphooxy-5-oxopentan-1-yl)-L-glutamine + NADPH + H(+). It catalyses the reaction [amino-group carrier protein]-C-terminal-gamma-(L-glutamyl-5-semialdehyde)-L-glutamate + phosphate + NADP(+) = [amino-group carrier protein]-C-terminal-gamma-(5-phospho-L-glutamyl)-L-glutamate + NADPH + H(+). It functions in the pathway amino-acid biosynthesis; L-lysine biosynthesis via AAA pathway; L-lysine from L-alpha-aminoadipate (Thermus route): step 3/5. The protein operates within amino-acid biosynthesis; L-arginine biosynthesis. Its function is as follows. Involved in both the arginine and lysine biosynthetic pathways. This chain is Putative [LysW]-L-2-aminoadipate/[LysW]-L-glutamate phosphate reductase, found in Nitrosopumilus maritimus (strain SCM1).